We begin with the raw amino-acid sequence, 424 residues long: Serine/threonine-protein kinase H1 (424 aa).

G2 carries N-myristoyl glycine lipidation. Residue C3 is the site of S-palmitoyl cysteine attachment. The tract at residues 56 to 80 (SQYAHPCPGPPTAGHTEPPSEPPRR) is disordered. In terms of domain architecture, Protein kinase spans 98 to 355 (YDIKALIGRG…ALQALRHPWV (258 aa)). ATP-binding positions include 104-112 (IGRGSFSRV) and K127. The active-site Proton acceptor is the D218. A disordered region spans residues 378 to 407 (RASSRCQSTKSAQSTRSSRSTRSNKSRRVR). A phosphoserine; by autocatalysis mark is found at S380 and S381. Residues 385-398 (STKSAQSTRSSRST) show a composition bias toward low complexity.

It belongs to the protein kinase superfamily. CAMK Ser/Thr protein kinase family. As to quaternary structure, homodimer. In terms of processing, autophosphorylated on serine residues. Post-translationally, myristoylated. Required for membrane association. Prerequisite for palmitoylation to occur. Palmitoylated. As to expression, expressed in all tissues and cell lines tested with the highest level of abundance in testis.

The protein localises to the golgi apparatus. The protein resides in the cytoplasm. It is found in the cytoskeleton. It localises to the microtubule organizing center. Its subcellular location is the centrosome. The protein localises to the nucleus speckle. The protein resides in the endoplasmic reticulum membrane. It is found in the cell membrane. The enzyme catalyses L-seryl-[protein] + ATP = O-phospho-L-seryl-[protein] + ADP + H(+). It catalyses the reaction L-threonyl-[protein] + ATP = O-phospho-L-threonyl-[protein] + ADP + H(+). With respect to regulation, activity depends on Ca(2+) concentration. In terms of biological role, serine/threonine protein kinase that may be involved in the regulation of pre-mRNA processing. It may phosphorylate components of nuclear splice factor compartments (SFC), such as non-snRNP splicing factors containing a serine/arginine-rich domain (SR proteins). Reversible phosphorylation of SR proteins may cause their release into the nucleoplasm and change their local concentration, thereby influencing alternative splicing. The chain is Serine/threonine-protein kinase H1 (PSKH1) from Homo sapiens (Human).